We begin with the raw amino-acid sequence, 349 residues long: GDSL esterase/lipase At2g19050 (349 aa).

The signal sequence occupies residues 1–23 (MAEAIFKALLLVIATTAFATTEA). The active-site Nucleophile is the Ser-38. An N-linked (GlcNAc...) asparagine glycan is attached at Asn-49. Residues Asp-316 and His-319 contribute to the active site.

Belongs to the 'GDSL' lipolytic enzyme family.

Its subcellular location is the secreted. This is GDSL esterase/lipase At2g19050 from Arabidopsis thaliana (Mouse-ear cress).